Consider the following 370-residue polypeptide: Allatostatins (370 aa).

A signal peptide spans 1–27; sequence MSGPRTCFCLPSALVLVLLSLSTSALG. A propeptide spanning residues 28–65 is cleaved from the precursor; that stretch reads TAPEPSGVHEESPAGGGTDLLPHPEDLSASDNPDLEFV. Residues 29 to 58 form a disordered region; sequence APEPSGVHEESPAGGGTDLLPHPEDLSASD. A leucine amide mark is found at L73, L94, L105, and L117. Residues 121 to 151 constitute a propeptide that is removed on maturation; that stretch reads DYDYYGEEDEDDQQAIGDEDIEESDVGDLMD. 6 positions are modified to leucine amide: L161, L172, L188, L200, L213, and L232. Positions 236–251 are excised as a propeptide; the sequence is SDDIDFRELEEKFAED. L264 carries the post-translational modification Leucine amide. Residues 268-345 constitute a propeptide that is removed on maturation; sequence EVEPSELEAV…ITPEEFSRMV (78 aa). Positions 273–298 are disordered; it reads ELEAVRNEEKDNSSVHDKKNNTNDMH. A Leucine amide modification is found at L353. An Isoleucine amide modification is found at I364. Positions 368–370 are excised as a propeptide; sequence SER.

Belongs to the allatostatin family. As to expression, brain, subesophageal ganglion and corpus allatum.

The protein resides in the secreted. Its function is as follows. Neuropeptide inhibitors of juvenile hormone synthesis and gut muscle contraction. This is Allatostatins from Diploptera punctata (Pacific beetle cockroach).